The following is a 118-amino-acid chain: Large ribosomal subunit protein bL20 (118 aa).

The protein belongs to the bacterial ribosomal protein bL20 family.

Binds directly to 23S ribosomal RNA and is necessary for the in vitro assembly process of the 50S ribosomal subunit. It is not involved in the protein synthesizing functions of that subunit. The chain is Large ribosomal subunit protein bL20 from Thermosipho melanesiensis (strain DSM 12029 / CIP 104789 / BI429).